Consider the following 172-residue polypeptide: MKKIVLVGYMASGKTEIGKLLSKKVNLPFLDIDYLIEESLSKTVNEIFEEKGEVFFRKKEHEVFKNKINSKQSFILSLGGGTPCYAENHLFLQKDDVISIYLKGSVATLVDRLKMNKDKRPLLKNLANDELAEFVAKHLFDRNFYYSHCKYTIIIDDKSPFDIVEEIHKILF.

Position 11 to 16 (11 to 16 (ASGKTE)) interacts with ATP. Threonine 15 serves as a coordination point for Mg(2+). Positions 33, 57, and 80 each coordinate substrate. Residue arginine 120 coordinates ATP. Arginine 142 contacts substrate.

It belongs to the shikimate kinase family. As to quaternary structure, monomer. Mg(2+) serves as cofactor.

The protein resides in the cytoplasm. It carries out the reaction shikimate + ATP = 3-phosphoshikimate + ADP + H(+). It participates in metabolic intermediate biosynthesis; chorismate biosynthesis; chorismate from D-erythrose 4-phosphate and phosphoenolpyruvate: step 5/7. Functionally, catalyzes the specific phosphorylation of the 3-hydroxyl group of shikimic acid using ATP as a cosubstrate. The protein is Shikimate kinase of Flavobacterium psychrophilum (strain ATCC 49511 / DSM 21280 / CIP 103535 / JIP02/86).